Reading from the N-terminus, the 557-residue chain is Urocanate hydratase (557 aa).

Residues 52–53 (GG), Gln130, 176–178 (GMG), Glu196, Arg201, 242–243 (NA), 263–267 (QTSAH), 273–274 (YL), and Tyr322 contribute to the NAD(+) site. Cys410 is an active-site residue. Gly492 contacts NAD(+).

It belongs to the urocanase family. NAD(+) serves as cofactor.

The protein resides in the cytoplasm. It catalyses the reaction 4-imidazolone-5-propanoate = trans-urocanate + H2O. It participates in amino-acid degradation; L-histidine degradation into L-glutamate; N-formimidoyl-L-glutamate from L-histidine: step 2/3. Functionally, catalyzes the conversion of urocanate to 4-imidazolone-5-propionate. This chain is Urocanate hydratase, found in Allorhizobium ampelinum (strain ATCC BAA-846 / DSM 112012 / S4) (Agrobacterium vitis (strain S4)).